A 437-amino-acid polypeptide reads, in one-letter code: Cytochrome b (437 aa).

Residues 45–65 (WIWGIVLAFTLVLQIVTGIVL) form a helical membrane-spanning segment. Heme b-binding residues include His-97 and His-111. Helical transmembrane passes span 100-120 (GASLFFLAVYIHIFRGLYYGS), 129-149 (WIVGMVIYLLMMGTAFMGYVL), 156-176 (FWGATVITGLFGAIPGIGPSI), 194-214 (FFSLHYLLPFVIAALVAIHIW), 248-268 (FVIKDLFALALVLLGFFAVVA), 298-318 (FLPFYAILRAFAADVWVVILV), 330-350 (FFGVIAMFGAIAVMALAPWLD), 365-385 (MWFWFLVLDFVVLTWVGAMPT), and 391-411 (WISLIASTYWFAYFLVILPLL). His-198 and His-212 together coordinate heme b.

This sequence belongs to the cytochrome b family. In terms of assembly, the main subunits of complex b-c1 are: cytochrome b, cytochrome c1 and the Rieske protein. Heme b is required as a cofactor.

The protein resides in the cell membrane. Its function is as follows. Component of the ubiquinol-cytochrome c reductase complex (complex III or cytochrome b-c1 complex), which is a respiratory chain that generates an electrochemical potential coupled to ATP synthesis. This chain is Cytochrome b (petB), found in Rhodobacter capsulatus (Rhodopseudomonas capsulata).